The chain runs to 548 residues: Glutamate--tRNA ligase (548 aa).

The short motif at Pro102–His112 is the 'HIGH' region element.

Belongs to the class-I aminoacyl-tRNA synthetase family. Glutamate--tRNA ligase type 2 subfamily.

It localises to the cytoplasm. It catalyses the reaction tRNA(Glu) + L-glutamate + ATP = L-glutamyl-tRNA(Glu) + AMP + diphosphate. In terms of biological role, catalyzes the attachment of glutamate to tRNA(Glu) in a two-step reaction: glutamate is first activated by ATP to form Glu-AMP and then transferred to the acceptor end of tRNA(Glu). The polypeptide is Glutamate--tRNA ligase (Thermoplasma acidophilum (strain ATCC 25905 / DSM 1728 / JCM 9062 / NBRC 15155 / AMRC-C165)).